We begin with the raw amino-acid sequence, 510 residues long: Major facilitator superfamily domain-containing protein 4A (510 aa).

12 consecutive transmembrane segments (helical) span residues 19–39 (LTYWSVFFSFGLCIAFLGPTL), 53–73 (ISWVFFSQQLCLLLGSALGGV), 82–102 (LWALFTSTLVISLVFAVIPFC), 107–127 (VLASVIALAGLAMGCIDTVAN), 139–159 (AFFLQVLHFFVGLGALLSPLI), 218–238 (YAFWIMALINLPVPLAVLFLL), 303–323 (FFAIHITAALVLFMTDGMMGA), 345–365 (GYLPSLFWGFITLGRFISIPV), 380–400 (VGVVVTFLMLLIFSYNVIFLF), 401–421 (VGTASLGLFLSSTFPSMLAYT), 434–454 (VLVTGAGIGEMVLQMLVGLIF), and 462–482 (FLVCGVIFGCLAFIFYILLLF).

It belongs to the major facilitator superfamily.

It is found in the membrane. This is Major facilitator superfamily domain-containing protein 4A from Mus musculus (Mouse).